The primary structure comprises 535 residues: Ribonuclease Y (535 aa).

Residues 30–50 (IWALPALVIGLAIGAGIGILI) traverse the membrane as a helical segment. A KH domain is found at 225–285 (TVSTVALPSE…VRREVARLAL (61 aa)). Residues 351–444 (VLQHSLECAL…VQAVDAISGG (94 aa)) form the HD domain.

It belongs to the RNase Y family.

The protein resides in the cell membrane. Functionally, endoribonuclease that initiates mRNA decay. The sequence is that of Ribonuclease Y from Roseiflexus sp. (strain RS-1).